Reading from the N-terminus, the 285-residue chain is ATP synthase gamma chain (285 aa).

The protein belongs to the ATPase gamma chain family. F-type ATPases have 2 components, CF(1) - the catalytic core - and CF(0) - the membrane proton channel. CF(1) has five subunits: alpha(3), beta(3), gamma(1), delta(1), epsilon(1). CF(0) has three main subunits: a, b and c.

The protein resides in the cell membrane. Produces ATP from ADP in the presence of a proton gradient across the membrane. The gamma chain is believed to be important in regulating ATPase activity and the flow of protons through the CF(0) complex. The polypeptide is ATP synthase gamma chain (Dehalococcoides mccartyi (strain ATCC BAA-2266 / KCTC 15142 / 195) (Dehalococcoides ethenogenes (strain 195))).